Consider the following 1207-residue polypeptide: Protein STU1 (1207 aa).

Disordered regions lie at residues 504-525 (EKTA…SQSS), 549-730 (EQRR…DEDL), 789-856 (AQSI…EGVQ), 869-928 (AVEH…LYSE), and 1086-1105 (SSTP…LPGA). Low complexity predominate over residues 576–594 (SASTKSLSARTASTASTAS). 3 stretches are compositionally biased toward polar residues: residues 605–624 (SGES…SLMS), 653–672 (GKTT…TTKK), and 684–710 (AQTQ…VQKT). 2 stretches are compositionally biased toward low complexity: residues 711 to 724 (ASAS…APSA) and 791 to 806 (SIHH…SHLS). Residues 869-878 (AVEHEVEKPV) are compositionally biased toward basic and acidic residues. Polar residues-rich tracts occupy residues 895-905 (NESISSDTVMG) and 919-928 (TSTGSVLYSE).

Belongs to the CLASP family. In terms of assembly, interacts with microtubules.

The protein localises to the cytoplasm. Its subcellular location is the cytoskeleton. It localises to the nucleus. It is found in the spindle. Functionally, microtubule binding protein that promotes the stabilization of dynamic microtubules. Required for mitotic spindle formation. The sequence is that of Protein STU1 (STU1) from Phaeosphaeria nodorum (strain SN15 / ATCC MYA-4574 / FGSC 10173) (Glume blotch fungus).